We begin with the raw amino-acid sequence, 350 residues long: Quercetin 2,3-dioxygenase (350 aa).

The segment at 1–145 (DTSSLIVEDA…FYYLGTNATD (145 aa)) is cupin 1. The Cu cation site is built by His66, His68, and Glu73. His66 lines the substrate pocket. Glu73 lines the substrate pocket. N-linked (GlcNAc...) asparagine glycosylation is found at Asn90 and Asn109. Position 112 (His112) interacts with Cu cation. Residue Asn142 is glycosylated (N-linked (GlcNAc...) asparagine). Positions 146-205 (TTHTPYIPSSSDSSSTTGPDSSTISTLQSFDVYAELSFTPRTDTVNGTAPANTVWHTGAN) are linker. The disordered stretch occupies residues 148 to 167 (HTPYIPSSSDSSSTTGPDSS). A compositionally biased stretch (low complexity) spans 152–167 (IPSSSDSSSTTGPDSS). N-linked (GlcNAc...) asparagine glycosylation is found at Asn191 and Asn248. The cupin 2 stretch occupies residues 206–350 (ALASTAGDPY…WSSVSFPADW (145 aa)).

As to quaternary structure, homodimer. Requires Cu cation as cofactor. In terms of processing, the N-linked glycan at Asn-191 consists of Man(5)-GlcNAc(2).

It carries out the reaction quercetin + O2 = 2-(3,4-dihydroxybenzoyloxy)-4,6-dihydroxybenzoate + CO. It functions in the pathway flavonoid metabolism; quercetin degradation. Its activity is regulated as follows. Inhibited by diethyldithiocarbamate and kojic acid. In terms of biological role, performs the first step in the degradation of the flavonoid quercetin by a dioxygenase reaction. The enzyme catalyzes the cleavage of the O-heteroaromatic ring of the flavonol quercetin yielding the depside 2-protocatechuoyl-phloroglucinol carboxylic acid and carbon monoxide. This involves the remarkable dioxygenolytic cleavage of two carbon-carbon bonds. In Aspergillus japonicus, this protein is Quercetin 2,3-dioxygenase.